We begin with the raw amino-acid sequence, 127 residues long: Aspartate 1-decarboxylase (127 aa).

The active-site Schiff-base intermediate with substrate; via pyruvic acid is S25. S25 carries the post-translational modification Pyruvic acid (Ser). Position 57 (T57) interacts with substrate. The active-site Proton donor is the Y58. Residue 73-75 (GAA) participates in substrate binding.

Belongs to the PanD family. In terms of assembly, heterooctamer of four alpha and four beta subunits. It depends on pyruvate as a cofactor. In terms of processing, is synthesized initially as an inactive proenzyme, which is activated by self-cleavage at a specific serine bond to produce a beta-subunit with a hydroxyl group at its C-terminus and an alpha-subunit with a pyruvoyl group at its N-terminus.

It localises to the cytoplasm. It carries out the reaction L-aspartate + H(+) = beta-alanine + CO2. The protein operates within cofactor biosynthesis; (R)-pantothenate biosynthesis; beta-alanine from L-aspartate: step 1/1. In terms of biological role, catalyzes the pyruvoyl-dependent decarboxylation of aspartate to produce beta-alanine. This Staphylococcus aureus (strain MSSA476) protein is Aspartate 1-decarboxylase.